The primary structure comprises 434 residues: Ribosomal protein uS12 methylthiotransferase RimO (434 aa).

An MTTase N-terminal domain is found at 1–107; sequence MHLGCEKNLV…ILNVLQRIEQ (107 aa). [4Fe-4S] cluster-binding residues include Cys5, Cys41, Cys70, Cys145, Cys149, and Cys152. The region spanning 131–360 is the Radical SAM core domain; it reads TTGKAVAYLK…ISIQQPIAEL (230 aa). The region spanning 363 to 434 is the TRAM domain; that stretch reads QNWIGRTVDV…DLYDLTGQVV (72 aa).

This sequence belongs to the methylthiotransferase family. RimO subfamily. Requires [4Fe-4S] cluster as cofactor.

The protein localises to the cytoplasm. The enzyme catalyses L-aspartate(89)-[ribosomal protein uS12]-hydrogen + (sulfur carrier)-SH + AH2 + 2 S-adenosyl-L-methionine = 3-methylsulfanyl-L-aspartate(89)-[ribosomal protein uS12]-hydrogen + (sulfur carrier)-H + 5'-deoxyadenosine + L-methionine + A + S-adenosyl-L-homocysteine + 2 H(+). Functionally, catalyzes the methylthiolation of an aspartic acid residue of ribosomal protein uS12. This is Ribosomal protein uS12 methylthiotransferase RimO from Prochlorococcus marinus (strain SARG / CCMP1375 / SS120).